Reading from the N-terminus, the 598-residue chain is Nuclear receptor subfamily 4immunitygroup A member 1 (598 aa).

Disordered regions lie at residues 1-44 (MPCI…EAAP), 131-158 (YYGS…DGSF), 177-206 (LPKA…AQSP), and 221-265 (GESY…GSEG). Over residues 134 to 145 (SPCSAPSPSTPS) the composition is skewed to low complexity. Positions 171–466 (RAWTEQLPKA…PGEGKLIFCS (296 aa)) are required for nuclear import. The nuclear receptor DNA-binding region spans 264–339 (EGRCAVCGDN…VGMVKEVVRT (76 aa)). 2 consecutive NR C4-type zinc fingers follow at residues 267 to 287 (CAVC…CEGC) and 303 to 327 (CLAN…FQKC). The tract at residues 268 to 354 (AVCGDNASCQ…RRGRLPSKPK (87 aa)) is required for binding NBRE-containing DNA. Residues 299–361 (AKYICLANKD…KPKQPPDASP (63 aa)) are required for the interaction with RXRA. Ser341 bears the Phosphoserine; by PKA mark. A disordered region spans residues 341-361 (SLKGRRGRLPSKPKQPPDASP). Ser351 is modified (phosphoserine). Positions 360-595 (SPANLLTSLV…PIIDKIFMDT (236 aa)) constitute an NR LBD domain. The tract at residues 521 to 544 (PRRVEELQNRIASCLKEHVAAVAG) is binds lipopolysaccharide. The interval 584–595 (PPPIIDKIFMDT) is AF-2.

The protein belongs to the nuclear hormone receptor family. NR4 subfamily. Binds the NGFI-B response element (NBRE) as a monomer. Binds the Nur response element (NurRE), consisting of two inverse NBRE-related octanucleotide repeats separated by 6 base-pairs, as a dimer. Interacts (via N-terminus) with NLRP3 (via LRR repeat domain); the interaction is direct, requires binding of NR4A1/Nur77 to NBRE-containing dsDNA and lipopolysaccharide, and leads to non-canonical NLRP3 inflammasome activation. Interacts with GADD45GIP1. Interacts with STK11. Interacts with IFI27. Heterodimer (via DNA-binding domain) with RXRA (via C-terminus); DNA-binding of the heterodimer is enhanced by 9-cis retinoic acid. Competes for the RXRA interaction with EP300 and thereby attenuates EP300 mediated acetylation of RXRA. Interacts with NCOA1. Interacts with NCOA2. Interacts with NCOA3. The cofactor is Zn(2+). Post-translationally, phosphorylated at Ser-351 by RPS6KA1 and RPS6KA3 in response to mitogenic or stress stimuli. In terms of processing, acetylated by p300/CBP, acetylation increases stability. Deacetylated by HDAC1. In terms of tissue distribution, fetal muscle and adult liver, brain and thyroid.

Its subcellular location is the nucleus. It is found in the cytoplasm. The protein localises to the cytosol. It localises to the mitochondrion. Its transcription factor activity is activated by binding cytosporone B (Csn-B) via its ligand-binding (NR LBD) domain and stimulates recruitment of coactivators NCOA1 and NCOA2, but not NCOA3, to promoters. Csn-B-binding is also accompanied by its translocation to the mitochondrion. Its transcription factor activity is activated by corticotropin-releasing hormone (CRH) and forskolin. Not activated by binding cytosporone C (Csn-C). In terms of biological role, orphan nuclear receptor. Binds the NGFI-B response element (NBRE) 5'-AAAGGTCA-3'. Binds 9-cis-retinoic acid outside of its ligand-binding (NR LBD) domain. Participates in energy homeostasis by sequestrating the kinase STK11 in the nucleus, thereby attenuating cytoplasmic AMPK activation. Regulates the inflammatory response in macrophages by regulating metabolic adaptations during inflammation, including repressing the transcription of genes involved in the citric acid cycle (TCA). Inhibits NF-kappa-B signaling by binding to low-affinity NF-kappa-B binding sites, such as at the IL2 promoter. May act concomitantly with NR4A2 in regulating the expression of delayed-early genes during liver regeneration. Plays a role in the vascular response to injury. In the cytosol, upon its detection of both bacterial lipopolysaccharide (LPS) and NBRE-containing mitochondrial DNA released by GSDMD pores during pyroptosis, it promotes non-canonical NLRP3 inflammasome activation by stimulating association of NLRP3 and NEK7. This is Nuclear receptor subfamily 4immunitygroup A member 1 (NR4A1) from Homo sapiens (Human).